The chain runs to 309 residues: uncharacterized protein (309 aa).

Residues 1–16 show a composition bias toward basic residues; that stretch reads MAGNSRRRGAVRKAGT. The interval 1 to 70 is disordered; that stretch reads MAGNSRRRGA…AKRTEETETV (70 aa). S-adenosyl-L-methionine is bound by residues glycine 261, isoleucine 281, and leucine 290.

This sequence belongs to the class IV-like SAM-binding methyltransferase superfamily. RNA methyltransferase TrmH family.

This is an uncharacterized protein from Mycobacterium avium (strain 104).